Reading from the N-terminus, the 226-residue chain is tRNA (guanine-N(7)-)-methyltransferase (226 aa).

Glu57, Glu82, Asp109, and Asp132 together coordinate S-adenosyl-L-methionine. Asp132 is a catalytic residue. Substrate is bound by residues Lys136, Asp168, and 205-208; that span reads TKFE.

The protein belongs to the class I-like SAM-binding methyltransferase superfamily. TrmB family.

It carries out the reaction guanosine(46) in tRNA + S-adenosyl-L-methionine = N(7)-methylguanosine(46) in tRNA + S-adenosyl-L-homocysteine. It participates in tRNA modification; N(7)-methylguanine-tRNA biosynthesis. In terms of biological role, catalyzes the formation of N(7)-methylguanine at position 46 (m7G46) in tRNA. This is tRNA (guanine-N(7)-)-methyltransferase from Legionella pneumophila subsp. pneumophila (strain Philadelphia 1 / ATCC 33152 / DSM 7513).